Reading from the N-terminus, the 182-residue chain is Adenine phosphoribosyltransferase (182 aa).

This sequence belongs to the purine/pyrimidine phosphoribosyltransferase family. In terms of assembly, homodimer.

It is found in the cytoplasm. The catalysed reaction is AMP + diphosphate = 5-phospho-alpha-D-ribose 1-diphosphate + adenine. The protein operates within purine metabolism; AMP biosynthesis via salvage pathway; AMP from adenine: step 1/1. Catalyzes a salvage reaction resulting in the formation of AMP, that is energically less costly than de novo synthesis. This is Adenine phosphoribosyltransferase from Bordetella pertussis (strain Tohama I / ATCC BAA-589 / NCTC 13251).